Reading from the N-terminus, the 354-residue chain is Petrobactin import system permease protein FatC (354 aa).

The next 9 helical transmembrane spans lie at 37–57 (YWIV…GLLV), 77–97 (IVAI…TVAF), 116–136 (LYSA…LINF), 141–161 (SFLF…GWLL), 168–188 (LQLM…VSTF), 214–234 (PAYF…IFAH), 259–279 (VIYT…LIGP), 302–322 (YIFP…YFLM), and 329–349 (QGVV…TIVL).

The protein belongs to the binding-protein-dependent transport system permease family. FecCD subfamily. In terms of assembly, the complex is composed of two ATP-binding proteins (FatE), two transmembrane proteins (FatC and FatD) and a solute-binding protein (FpuA).

It localises to the cell membrane. In terms of biological role, part of an ABC transporter complex involved in ferric-petrobactin uptake. Probably responsible for the translocation of the substrate across the membrane. The sequence is that of Petrobactin import system permease protein FatC from Bacillus anthracis.